The sequence spans 94 residues: Small ribosomal subunit protein bS18 (94 aa).

This sequence belongs to the bacterial ribosomal protein bS18 family. As to quaternary structure, part of the 30S ribosomal subunit. Forms a tight heterodimer with protein bS6.

Its function is as follows. Binds as a heterodimer with protein bS6 to the central domain of the 16S rRNA, where it helps stabilize the platform of the 30S subunit. The polypeptide is Small ribosomal subunit protein bS18 (Polaromonas naphthalenivorans (strain CJ2)).